Consider the following 329-residue polypeptide: Malate dehydrogenase (329 aa).

Residue 12–18 participates in NAD(+) binding; the sequence is GAAGQIG. Residues Arg95 and Arg101 each contribute to the substrate site. NAD(+)-binding positions include Asn108, Gln115, and 132 to 134; that span reads VGN. Asn134 and Arg165 together coordinate substrate. The active-site Proton acceptor is the His190.

It belongs to the LDH/MDH superfamily. MDH type 2 family.

It carries out the reaction (S)-malate + NAD(+) = oxaloacetate + NADH + H(+). Its function is as follows. Catalyzes the reversible oxidation of malate to oxaloacetate. The polypeptide is Malate dehydrogenase (Bordetella bronchiseptica (strain ATCC BAA-588 / NCTC 13252 / RB50) (Alcaligenes bronchisepticus)).